Here is a 1021-residue protein sequence, read N- to C-terminus: Outer capsid protein P3 (1021 aa).

Belongs to the phytoreovirus inner capsid protein P3 family. Homodimer. Homomultimer.

The protein resides in the virion. It localises to the host cytoplasm. Functionally, capsid protein which self-assembles to form the inner icosahedral capsid with a T=2 symmetry, and consisting of 60 P3 dimers. The chain is Outer capsid protein P3 from Nephotettix cincticeps (Green rice leafhopper).